Here is a 249-residue protein sequence, read N- to C-terminus: MNVLSCSINTLIKEGLYEISGVEVGQHFYWQIGGFQVHAQVLITSWVVIAILLGSAVLAIRNPQTIPTDGQNFFEFVLEFIRDVSKTQIGEEYGPWVPFIGTLFLFIFVSNWSGALLPWKIIQLPQGELAAPTNDINTTVALALLTSAAYFYAGLSKKGLGYFSKYIQPTPILLPINILEDFTKPLSLSFRLFGNILADELVVVVLVSLVPLVVPIPVMFLGLFTSGIQALIFATLAAAYIGESMEGHH.

The next 5 membrane-spanning stretches (helical) occupy residues 40–60, 97–117, 136–156, 201–221, and 222–242; these read QVLI…VLAI, VPFI…GALL, INTT…AGLS, LVVV…VMFL, and GLFT…AYIG.

The protein belongs to the ATPase A chain family. In terms of assembly, F-type ATPases have 2 components, CF(1) - the catalytic core - and CF(0) - the membrane proton channel. CF(1) has five subunits: alpha(3), beta(3), gamma(1), delta(1), epsilon(1). CF(0) has four main subunits: a, b, b' and c.

The protein resides in the plastid. It is found in the chloroplast thylakoid membrane. Key component of the proton channel; it plays a direct role in the translocation of protons across the membrane. This chain is ATP synthase subunit a, chloroplastic, found in Capsella bursa-pastoris (Shepherd's purse).